The primary structure comprises 62 residues: E3 SUMO-protein ligase EGR2 (62 aa).

C2H2-type zinc fingers lie at residues 1 to 21 (AEGC…IRIH), 27 to 49 (FQCA…IRTH), and 55 to 62 (FACDYCGR).

It belongs to the EGR C2H2-type zinc-finger protein family. As to quaternary structure, interacts with HCFC1. Interacts with WWP2. Interacts with UBC9. Interacts with CITED1. Interacts (via phosphorylated form) with SFN. Post-translationally, ubiquitinated by WWP2 leading to proteasomal degradation. Acetylated. May be deacetylated by HDAC6, HDAC10 or SIRT1.

It localises to the nucleus. It functions in the pathway protein modification; protein sumoylation. In terms of biological role, sequence-specific DNA-binding transcription factor. Plays a role in hindbrain segmentation by regulating the expression of a subset of homeobox containing genes and in Schwann cell myelination by regulating the expression of genes involved in the formation and maintenance of myelin. Binds to two EGR2-consensus sites EGR2A (5'-CTGTAGGAG-3') and EGR2B (5'-ATGTAGGTG-3') in the HOXB3 enhancer and promotes HOXB3 transcriptional activation. Binds to specific DNA sites located in the promoter region of HOXA4, HOXB2 and ERBB2. Regulates hindbrain segmentation by controlling the expression of Hox genes, such as HOXA4, HOXB3 and HOXB2, and thereby specifying odd and even rhombomeres. Promotes the expression of HOXB3 in the rhombomere r5 in the hindbrain. Regulates myelination in the peripheral nervous system after birth, possibly by regulating the expression of myelin proteins, such as MPZ, and by promoting the differentiation of Schwann cells. Involved in the development of the jaw openener musculature, probably by playing a role in its innervation through trigeminal motor neurons. May play a role in adipogenesis, possibly by regulating the expression of CEBPB. Its function is as follows. E3 SUMO-protein ligase helping SUMO1 conjugation to its coregulators NAB1 and NAB2, whose sumoylation down-regulates EGR2 transcriptional activity. This Cerdocyon thous (Crab-eating fox) protein is E3 SUMO-protein ligase EGR2 (EGR2).